A 100-amino-acid chain; its full sequence is uncharacterized protein (100 aa).

Residues Met-1 to Gly-17 form the signal peptide. Cys-18 carries the N-palmitoyl cysteine lipid modification. Cys-18 carries S-diacylglycerol cysteine lipidation.

It is found in the cell membrane. This is an uncharacterized protein from Salmonella choleraesuis (strain SC-B67).